We begin with the raw amino-acid sequence, 213 residues long: Small ribosomal subunit protein eS1 (213 aa).

Belongs to the eukaryotic ribosomal protein eS1 family.

The protein is Small ribosomal subunit protein eS1 of Desulfurococcus amylolyticus (strain DSM 18924 / JCM 16383 / VKM B-2413 / 1221n) (Desulfurococcus kamchatkensis).